The sequence spans 104 residues: Replication restart protein PriB (104 aa).

Residues 1–101 (MTNRLALSGT…LHAEQIELID (101 aa)) enclose the SSB domain.

The protein belongs to the PriB family. Homodimer. Interacts with PriA and DnaT. Component of the replication restart primosome. Primosome assembly occurs via a 'hand-off' mechanism. PriA binds to replication forks, subsequently PriB then DnaT bind; DnaT then displaces ssDNA to generate the helicase loading substrate.

Functionally, involved in the restart of stalled replication forks, which reloads the replicative helicase on sites other than the origin of replication; the PriA-PriB pathway is the major replication restart pathway. During primosome assembly it facilitates complex formation between PriA and DnaT on DNA; stabilizes PriA on DNA. Stimulates the DNA unwinding activity of PriA helicase. The sequence is that of Replication restart protein PriB from Salmonella agona (strain SL483).